Here is a 2259-residue protein sequence, read N- to C-terminus: Protein Ycf2 (2259 aa).

1556–1563 (GSQETGRS) lines the ATP pocket.

It belongs to the Ycf2 family.

The protein localises to the plastid. It is found in the chloroplast stroma. In terms of biological role, probable ATPase of unknown function. Its presence in a non-photosynthetic plant (Epifagus virginiana) and experiments in tobacco indicate that it has an essential function which is probably not related to photosynthesis. The sequence is that of Protein Ycf2 from Physcomitrium patens (Spreading-leaved earth moss).